We begin with the raw amino-acid sequence, 503 residues long: Arabinose import ATP-binding protein AraG 1 (503 aa).

2 ABC transporter domains span residues 5-240 and 251-497; these read LRFD…MVGR and RTLG…LPQT. ATP is bound at residue 37 to 44; the sequence is GENGAGKS.

Belongs to the ABC transporter superfamily. Arabinose importer (TC 3.A.1.2.2) family. As to quaternary structure, the complex is composed of two ATP-binding proteins (AraG), two transmembrane proteins (AraH) and a solute-binding protein (AraF).

It is found in the cell inner membrane. It catalyses the reaction L-arabinose(out) + ATP + H2O = L-arabinose(in) + ADP + phosphate + H(+). Part of the ABC transporter complex AraFGH involved in arabinose import. Responsible for energy coupling to the transport system. This Burkholderia cenocepacia (strain HI2424) protein is Arabinose import ATP-binding protein AraG 1.